Here is a 797-residue protein sequence, read N- to C-terminus: Peroxisome proliferator-activated receptor gamma coactivator 1-alpha (797 aa).

N6-acetyllysine is present on lysine 77. Residues 101–138 (EDGLPSFDALTDGAVTTDNEASPSSMPDGTPPPQEAEE) form a disordered region. Residues 114 to 127 (AVTTDNEASPSSMP) are compositionally biased toward polar residues. The LXXLL motif signature appears at 142-146 (LKKLL). Lysine 144 is modified (N6-acetyllysine). Position 177 is a phosphothreonine; by AMPK (threonine 177). At lysine 183 the chain carries N6-acetyllysine. Residues 212–276 (YLTTNDDPPH…NDPKGSPFEN (65 aa)) are disordered. The segment covering 218-236 (DPPHTKPTENRNSSRDKCA) has biased composition (basic and acidic residues). Residues 243 to 259 (TQPQSQHAQAKPTTLSL) are compositionally biased toward polar residues. N6-acetyllysine is present on residues lysine 253, lysine 270, lysine 277, lysine 320, lysine 346, lysine 412, lysine 441, and lysine 450. The segment at 289-376 (GTAGLTPPTT…HEERKTKRPS (88 aa)) is disordered. The interval 292 to 338 (GLTPPTTPPHKANQDNPFKASPKLKPSCKTVVPPPTKRARYSECSGT) is interaction with PPARG. A mediates interaction with RNF34 region spans residues 349–797 (EQSELYAQLS…LKEAQRSLRR (449 aa)). A Phosphoserine; by AMPK modification is found at serine 538. 3 disordered regions span residues 543-598 (NSPC…SSRS), 612-634 (HRNSPLYVRSRSRSPYSRRPRYD), and 648-668 (EYRKEHEKRESERAKQRERQK). A compositionally biased stretch (basic residues) spans 562–577 (QRMRSRSRSFSRHRSC). The span at 578–598 (SRSPYSRSRSRSPGSRSSSRS) shows a compositional bias: low complexity. Positions 621–630 (SRSRSPYSRR) are enriched in basic residues. An RRM domain is found at 676 to 752 (RVIYVGKIRP…TDFELYFCGR (77 aa)). N6-acetyllysine occurs at positions 757 and 778.

As to quaternary structure, homooligomer. Interacts with MYBBP1A; inhibits MYBBP1A transcriptional activation. Interacts with PRDM16, LPIN1 and PML. Interacts (via LXXLL motif) with RORA and RORC (via AF-2 motif); activates RORA and RORC transcriptional activation. Interacts with LRPPRC. Interacts with FOXO1. Interacts with NR5A2. Phosphorylation by AMPK in skeletal muscle increases activation of its own promoter. Phosphorylated by CLK2. In terms of processing, heavily acetylated by KAT2A/GCN5 under conditions of high nutrients, leading to inactivation of PPARGC1A. Deacetylated by SIRT1 in low nutrients/high NAD conditions, leading to its activation. Post-translationally, ubiquitinated. Ubiquitination by RNF34 induces proteasomal degradation. As to expression, white quadriceps and red tibialis anterior (TA) muscles, liver, kidney and brown adipose tissue (at protein level). Skeletal muscle, brown adipose tissue, heart, kidney and brain.

Its subcellular location is the nucleus. The protein localises to the PML body. Its function is as follows. Transcriptional coactivator for steroid receptors and nuclear receptors. Greatly increases the transcriptional activity of PPARG and thyroid hormone receptor on the uncoupling protein promoter. Can regulate key mitochondrial genes that contribute to the program of adaptive thermogenesis. Plays an essential role in metabolic reprogramming in response to dietary availability through coordination of the expression of a wide array of genes involved in glucose and fatty acid metabolism. Acts as a key regulator of gluconeogenesis: stimulates hepatic gluconeogenesis by increasing the expression of gluconeogenic enzymes, and acting together with FOXO1 to promote the fasting gluconeogenic program. Induces the expression of PERM1 in the skeletal muscle in an ESRRA-dependent manner. Also involved in the integration of the circadian rhythms and energy metabolism. Required for oscillatory expression of clock genes, such as BMAL1 and NR1D1, through the coactivation of RORA and RORC, and metabolic genes, such as PDK4 and PEPCK. The polypeptide is Peroxisome proliferator-activated receptor gamma coactivator 1-alpha (Ppargc1a) (Mus musculus (Mouse)).